A 160-amino-acid polypeptide reads, in one-letter code: MAAERKTRLSKNLLRMKFMQRGLDSETKKQLEEEEKKIISEEHWYLDLPELKEKESFIIEEQSFLLCEDLLYGRMSFRGFNPEVEKLMLQMNAKHKAEEVEDETVELDVSDEEMARRYETLVGTIGKKFARKRDHANYEEDENGDITPIKAKKMFLKPQD.

Residues lysine 37 and lysine 86 each participate in a glycyl lysine isopeptide (Lys-Gly) (interchain with G-Cter in SUMO2) cross-link. At serine 110 the chain carries Phosphoserine. Residues 116–133 carry the Nuclear localization signal motif; that stretch reads RRYETLVGTIGKKFARKR. Lysine 127 is covalently cross-linked (Glycyl lysine isopeptide (Lys-Gly) (interchain with G-Cter in SUMO2)). Threonine 147 carries the post-translational modification Phosphothreonine. Residues lysine 150 and lysine 153 each participate in a glycyl lysine isopeptide (Lys-Gly) (interchain with G-Cter in SUMO2) cross-link.

It belongs to the MPP6 family. Associates with the RNA exosome complex, mediated by EXOSC3. Interacts with ARHGAP18. Interacts with exosome cofactors EXOSC10 and MTREX. Phosphorylated in M (mitotic) phase.

It localises to the nucleus. Its subcellular location is the nucleolus. The protein localises to the cytoplasm. Functionally, RNA-binding protein that associates with the RNA exosome complex. Involved in the 3'-processing of the 7S pre-RNA to the mature 5.8S rRNA and play a role in recruiting the RNA exosome complex to pre-rRNA; this function may include C1D. The chain is M-phase phosphoprotein 6 from Homo sapiens (Human).